The chain runs to 36 residues: Tddefensin (36 aa).

3 cysteine pairs are disulfide-bonded: Cys3-Cys24, Cys10-Cys32, and Cys14-Cys34.

The protein belongs to the invertebrate defensin family. As to expression, expressed by the venom gland.

It localises to the secreted. Antibacterial peptide mostly active against Gram-positive bacteria. This Tityus discrepans (Venezuelan scorpion) protein is Tddefensin.